The primary structure comprises 292 residues: Phosphatidylglycerol--prolipoprotein diacylglyceryl transferase (292 aa).

The next 6 membrane-spanning stretches (helical) occupy residues 25 to 45 (IALH…WWYA), 70 to 90 (FVVW…VLVW), 101 to 121 (AIIA…GIII), 138 to 158 (FDIV…CNFI), 193 to 213 (FMEG…FKAL), and 255 to 275 (GFTY…YLLL). An a 1,2-diacyl-sn-glycero-3-phospho-(1'-sn-glycerol)-binding site is contributed by Arg-153.

The protein belongs to the Lgt family.

The protein localises to the cell inner membrane. The catalysed reaction is L-cysteinyl-[prolipoprotein] + a 1,2-diacyl-sn-glycero-3-phospho-(1'-sn-glycerol) = an S-1,2-diacyl-sn-glyceryl-L-cysteinyl-[prolipoprotein] + sn-glycerol 1-phosphate + H(+). The protein operates within protein modification; lipoprotein biosynthesis (diacylglyceryl transfer). Functionally, catalyzes the transfer of the diacylglyceryl group from phosphatidylglycerol to the sulfhydryl group of the N-terminal cysteine of a prolipoprotein, the first step in the formation of mature lipoproteins. The sequence is that of Phosphatidylglycerol--prolipoprotein diacylglyceryl transferase from Bartonella quintana (strain Toulouse) (Rochalimaea quintana).